A 555-amino-acid chain; its full sequence is Glucose-6-phosphate isomerase (555 aa).

D-glucose 6-phosphate-binding positions include glycine 169 to serine 170, serine 219 to threonine 224, glutamine 364, glutamate 368, histidine 399, and lysine 521. Catalysis depends on glutamate 368, which acts as the Proton donor. Catalysis depends on residues histidine 399 and lysine 521.

The protein belongs to the GPI family. Homodimer.

It localises to the cytoplasm. The protein resides in the cytosol. The enzyme catalyses alpha-D-glucose 6-phosphate = beta-D-fructose 6-phosphate. The protein operates within carbohydrate degradation; glycolysis; D-glyceraldehyde 3-phosphate and glycerone phosphate from D-glucose: step 2/4. In the cytoplasm, catalyzes the conversion of glucose-6-phosphate to fructose-6-phosphate, the second step in glycolysis, and the reverse reaction during gluconeogenesis. The protein is Glucose-6-phosphate isomerase (PGI1) of Candida glabrata (strain ATCC 2001 / BCRC 20586 / JCM 3761 / NBRC 0622 / NRRL Y-65 / CBS 138) (Yeast).